Here is a 391-residue protein sequence, read N- to C-terminus: Phosphoglycerate kinase (391 aa).

Substrate contacts are provided by residues 21–23, Arg-36, 59–62, Arg-113, and Arg-146; these read DLN and HLGR. Residues Lys-197, Glu-319, and 345 to 348 contribute to the ATP site; that span reads GGDT.

This sequence belongs to the phosphoglycerate kinase family. In terms of assembly, monomer.

Its subcellular location is the cytoplasm. It catalyses the reaction (2R)-3-phosphoglycerate + ATP = (2R)-3-phospho-glyceroyl phosphate + ADP. It functions in the pathway carbohydrate degradation; glycolysis; pyruvate from D-glyceraldehyde 3-phosphate: step 2/5. The polypeptide is Phosphoglycerate kinase (Shewanella piezotolerans (strain WP3 / JCM 13877)).